The sequence spans 360 residues: Phospho-N-acetylmuramoyl-pentapeptide-transferase (360 aa).

Transmembrane regions (helical) follow at residues 21-41 (YLTF…LWIG), 71-91 (TPTM…ILWA), 94-114 (SNPY…IGFI), 142-162 (LVVA…VLVV), 168-188 (IMPQ…VGAS), 199-219 (GLAI…AWAT), 236-256 (ASEL…FLWF), 263-283 (VFMG…IAVL), 288-308 (FLLF…ILQV), and 338-358 (VIVR…VTLK).

The protein belongs to the glycosyltransferase 4 family. MraY subfamily. It depends on Mg(2+) as a cofactor.

The protein resides in the cell inner membrane. It carries out the reaction UDP-N-acetyl-alpha-D-muramoyl-L-alanyl-gamma-D-glutamyl-meso-2,6-diaminopimeloyl-D-alanyl-D-alanine + di-trans,octa-cis-undecaprenyl phosphate = di-trans,octa-cis-undecaprenyl diphospho-N-acetyl-alpha-D-muramoyl-L-alanyl-D-glutamyl-meso-2,6-diaminopimeloyl-D-alanyl-D-alanine + UMP. It participates in cell wall biogenesis; peptidoglycan biosynthesis. Catalyzes the initial step of the lipid cycle reactions in the biosynthesis of the cell wall peptidoglycan: transfers peptidoglycan precursor phospho-MurNAc-pentapeptide from UDP-MurNAc-pentapeptide onto the lipid carrier undecaprenyl phosphate, yielding undecaprenyl-pyrophosphoryl-MurNAc-pentapeptide, known as lipid I. The chain is Phospho-N-acetylmuramoyl-pentapeptide-transferase from Tolumonas auensis (strain DSM 9187 / NBRC 110442 / TA 4).